The sequence spans 117 residues: Ribosome maturation factor RimP (117 aa).

This sequence belongs to the RimP family.

It is found in the cytoplasm. Functionally, required for maturation of 30S ribosomal subunits. This is Ribosome maturation factor RimP from Rickettsia prowazekii (strain Madrid E).